Consider the following 782-residue polypeptide: Protein phosphatase 1 regulatory subunit 12C (782 aa).

2 stretches are compositionally biased toward low complexity: residues 1 to 19 (MSGE…AAAA) and 77 to 88 (DPGPGSGAASDP). Disordered stretches follow at residues 1 to 45 (MSGE…GERR) and 77 to 98 (DPGP…RAVL). Position 2 is an N-acetylserine (Ser-2). ANK repeat units lie at residues 104 to 133 (DGIS…TVNQ), 137 to 166 (EGWT…NIAA), 230 to 259 (TGAS…DTEL), and 263 to 292 (DGWT…GMDS). The stretch at 301-332 (CDLADEDVMNLLEELAQKQEDLRNQKEGSQGR) forms a coiled coil. Positions 321–685 (DLRNQKEGSQ…HEEPDGGFRK (365 aa)) are disordered. A compositionally biased stretch (polar residues) spans 332–341 (RGQESQVPSS). The span at 353-369 (SSREKISLQDLSKERRP) shows a compositional bias: basic and acidic residues. Residues 401 to 413 (VSSPVSSNPKSPV) are compositionally biased toward low complexity. 5 positions are modified to phosphoserine: Ser-403, Ser-411, Ser-431, Ser-454, and Ser-509. The segment covering 451–465 (RSASSSLLEKASTQA) has biased composition (polar residues). Basic and acidic residues predominate over residues 537-546 (VRDEESESQR). Basic residues predominate over residues 547 to 557 (KARSRLMRQSR). Phosphothreonine is present on Thr-560. A Phosphoserine modification is found at Ser-647. Residues 664–685 (SQRDLVLESKQEHEEPDGGFRK) show a composition bias toward basic and acidic residues. A coiled-coil region spans residues 681–782 (GGFRKMYTEL…LIRVISKLSK (102 aa)).

PP1 comprises a catalytic subunit, PPP1CA, PPP1CB or PPP1CC, and one or several targeting or regulatory subunits. PPP1R12C mediates binding to myosin. Interacts via its N-terminus with PPP1CB. Interacts with IL16. Interacts with the coiled-coil domain of MPRIP. Interacts with NOD2. In terms of processing, phosphorylation at Thr-560 is essential for its interaction with PPP1CB.

It localises to the cytoplasm. The protein localises to the cytoskeleton. The protein resides in the stress fiber. Regulates myosin phosphatase activity. The sequence is that of Protein phosphatase 1 regulatory subunit 12C from Mus musculus (Mouse).